The primary structure comprises 475 residues: Cytosolic non-specific dipeptidase (475 aa).

A2 bears the N-acetylalanine mark. K9 bears the N6-acetyllysine mark. The residue at position 58 (S58) is a Phosphoserine. H99 lines the Mn(2+) pocket. Residue D101 is part of the active site. Residue D132 coordinates Mn(2+). Residue E166 is the Proton acceptor of the active site. Residues 166 to 167 (EE), D195, and H228 each bind substrate. E167 and D195 together coordinate Mn(2+). S299 is modified (phosphoserine). Substrate contacts are provided by T330, R343, S417, and H445. H445 contributes to the Mn(2+) binding site.

It belongs to the peptidase M20A family. As to quaternary structure, homodimer. Mn(2+) is required as a cofactor. In terms of tissue distribution, ubiquitously expressed with higher levels in kidney and liver (at protein level). Expressed in peripheral blood leukocytes. Expressed in gastric mucosa and down-regulated in gastric cancer mucosal tissues (at protein level). As to expression, broadly expressed in fetal tissues. Expressed in adult liver and placenta.

It is found in the cytoplasm. The catalysed reaction is Hydrolysis of dipeptides, preferentially hydrophobic dipeptides including prolyl amino acids.. It catalyses the reaction L-threonyl-L-threonine + H2O = 2 L-threonine. The enzyme catalyses L-threonyl-L-serine + H2O = L-threonine + L-serine. It carries out the reaction L-seryl-L-threonine + H2O = L-threonine + L-serine. The catalysed reaction is L-cysteinylglycine + H2O = L-cysteine + glycine. It catalyses the reaction L-alanyl-L-cysteine + H2O = L-cysteine + L-alanine. The enzyme catalyses (S)-lactate + L-phenylalanine = N-[(S)-lactoyl]-L-phenylalanine + H2O. With respect to regulation, inhibited by p-hydroxymercurybenzoate. The inhibitory concentration 50% (IC(50)) is 13 uM. Inhibited by bestatin. The inhibitory concentration 50% (IC(50)) is 7 nM at pH 9.5. In terms of biological role, catalyzes the peptide bond hydrolysis in dipeptides, displaying a non-redundant activity toward threonyl dipeptides. Mediates threonyl dipeptide catabolism in a tissue-specific way. Has high dipeptidase activity toward cysteinylglycine, an intermediate metabolite in glutathione metabolism. Metabolizes N-lactoyl-amino acids, both through hydrolysis to form lactic acid and amino acids, as well as through their formation by reverse proteolysis. Plays a role in the regulation of cell cycle arrest and apoptosis. This chain is Cytosolic non-specific dipeptidase, found in Homo sapiens (Human).